The sequence spans 153 residues: Ribosome maturation factor RimP (153 aa).

The protein belongs to the RimP family.

The protein resides in the cytoplasm. Its function is as follows. Required for maturation of 30S ribosomal subunits. The protein is Ribosome maturation factor RimP of Chromohalobacter salexigens (strain ATCC BAA-138 / DSM 3043 / CIP 106854 / NCIMB 13768 / 1H11).